The chain runs to 410 residues: Protein BTN2 (410 aa).

Disordered regions lie at residues 223–264 (INEP…TKED) and 276–410 (MQEE…IEEI). Basic and acidic residues-rich tracts occupy residues 233 to 264 (SKID…TKED) and 276 to 311 (MQEE…KESL). The stretch at 243–330 (NMSESLKEEE…QQKKLQNSKS (88 aa)) forms a coiled coil. Over residues 334–362 (SEIEASNKNNNSNSGSAESDNESINSDSD) the composition is skewed to low complexity. Residues 364–373 (TLDFSVSGNT) show a composition bias toward polar residues.

In terms of assembly, interacts with RHB1, IST2, TDA3 and YIF1.

The protein localises to the cytoplasm. It is found in the late endosome. Functionally, V-SNARE binding protein that facilitates specific protein retrieval from a late endosome to the Golgi. Modulates the rate of arginine uptake. Involved in pH homeostasis. Required for the correct localization of IST2. May be involved in ion homeostasis together with IST2. The chain is Protein BTN2 (BTN2) from Saccharomyces cerevisiae (strain ATCC 204508 / S288c) (Baker's yeast).